A 339-amino-acid chain; its full sequence is Deubiquitinase and deneddylase Dub2 (339 aa).

A helical membrane pass occupies residues 36 to 56 (IIIALFLIVISCGLILCAYTF). Active-site residues include H203, D220, and C282.

The protein belongs to the peptidase C48 family.

It is found in the secreted. Its subcellular location is the host cell. The protein resides in the membrane. In terms of biological role, effector proteins function to alter host cell physiology and promote bacterial survival in host tissues. This protease possesses deubiquitinating and deneddylating activities. This Chlamydia trachomatis serovar D (strain ATCC VR-885 / DSM 19411 / UW-3/Cx) protein is Deubiquitinase and deneddylase Dub2 (cdu2).